The primary structure comprises 87 residues: Small ribosomal subunit protein bS18 (87 aa).

It belongs to the bacterial ribosomal protein bS18 family. In terms of assembly, part of the 30S ribosomal subunit. Forms a tight heterodimer with protein bS6.

In terms of biological role, binds as a heterodimer with protein bS6 to the central domain of the 16S rRNA, where it helps stabilize the platform of the 30S subunit. The chain is Small ribosomal subunit protein bS18 from Sulfurovum sp. (strain NBC37-1).